Consider the following 306-residue polypeptide: Prophage bactoprenol glucosyl transferase homolog (306 aa).

Over 1–227 (MKISLVVPVF…ITSFSTFPLR (227 aa)) the chain is Cytoplasmic. A helical transmembrane segment spans residues 228 to 248 (IWTYIGLVVASVAFIYGAWMI). At 249–262 (LDTIIFGNAVRGYP) the chain is on the periplasmic side. A helical transmembrane segment spans residues 263–283 (SLLVSILFLGGIQMIGIGVLG). Residues 284–306 (EYIGRTYIETKKRPKYIIKRVKK) lie on the Cytoplasmic side of the membrane.

It belongs to the glycosyltransferase 2 family. GtrB subfamily.

It is found in the cell inner membrane. Functionally, involved in O antigen modification. Catalyzes the transfer of the glucose residue from UDP-glucose to a lipid carrier. This is Prophage bactoprenol glucosyl transferase homolog (yfdH) from Escherichia coli (strain K12).